The sequence spans 682 residues: TPR repeat-containing thioredoxin TTL4 (682 aa).

Disordered stretches follow at residues 1–120 (MSHY…GTPL) and 132–157 (NNNNSSRGGGSGATSPNPGVLPTGNI). Ser8 bears the Phosphoserine mark. Positions 16–39 (KFRDSLSFQRDDDVINKPDFRELD) are enriched in basic and acidic residues. Residue Ser42 is modified to Phosphoserine. Over residues 48–71 (GSSSAAATPAASGSSSSSSGSASG) the composition is skewed to low complexity. TPR repeat units lie at residues 211 to 244 (SEEVKKAGNVMYRKGNYAEALALYDRAISLSPEN), 246 to 278 (AYRSNRAAALAASGRLEEAVKECLEAVRCDPSY), 280 to 312 (RAHQRLASLYLRLGEAENARRHLCVSGQCPDQA), 402 to 435 (AYVLCVQAQVDMALGRFENAIVKVERAMTIDHSN), 449 to 482 (VAKARTRGNELFSSGRYSEASVAYGDGLKLDAFN), 483 to 516 (SVLYCNRAACWFKLGMWEKSVDDCNQALRIQPSY), and 518 to 550 (KALLRRAASYGKLGRWEDAVRDYEVLRKELPGD). Residues 587–674 (DKFKTATSLP…MVCPSHQLLE (88 aa)) form the Thioredoxin domain.

As to expression, widely expressed.

In terms of biological role, involved in osmotic and salt stress tolerance. May play a role in the control of meristematic cell size during osmotic stress. In Arabidopsis thaliana (Mouse-ear cress), this protein is TPR repeat-containing thioredoxin TTL4 (TTL4).